A 242-amino-acid polypeptide reads, in one-letter code: Tryptophan synthase alpha chain (242 aa).

Active-site proton acceptor residues include E32 and D43.

This sequence belongs to the TrpA family. Tetramer of two alpha and two beta chains.

The protein localises to the plastid. It is found in the chloroplast. It carries out the reaction (1S,2R)-1-C-(indol-3-yl)glycerol 3-phosphate + L-serine = D-glyceraldehyde 3-phosphate + L-tryptophan + H2O. It functions in the pathway amino-acid biosynthesis; L-tryptophan biosynthesis; L-tryptophan from chorismate: step 5/5. The alpha subunit is responsible for the aldol cleavage of indoleglycerol phosphate to indole and glyceraldehyde 3-phosphate. The sequence is that of Tryptophan synthase alpha chain from Cyanidium caldarium (Red alga).